We begin with the raw amino-acid sequence, 143 residues long: Fluoride-specific ion channel FluC (143 aa).

4 helical membrane-spanning segments follow: residues 3 to 23 (AVVWWQSLLLVMLGGAFGSGL), 41 to 61 (WGTLAVNLIGSFVAGFLLIWL), 76 to 96 (IVGLIGGLTTFSSLMMECLVF), and 103 to 123 (LMVGLYLCITLLFGLLFVFLG). G81 and T84 together coordinate Na(+).

The protein belongs to the fluoride channel Fluc/FEX (TC 1.A.43) family.

The protein resides in the cell inner membrane. The enzyme catalyses fluoride(in) = fluoride(out). Na(+) is not transported, but it plays an essential structural role and its presence is essential for fluoride channel function. In terms of biological role, fluoride-specific ion channel. Important for reducing fluoride concentration in the cell, thus reducing its toxicity. The sequence is that of Fluoride-specific ion channel FluC from Xylella fastidiosa (strain 9a5c).